The sequence spans 125 residues: uncharacterized protein (125 aa).

The N-terminal stretch at 1–21 (MIRNIIITISAILLLTSKGFA) is a signal peptide. The stretch at 54-102 (KPEIREEIQKYRVEIVNINKKKRELYDKLSKEAQNFLAKEQEYKQRLSS) forms a coiled coil. Residues 96 to 125 (YKQRLSSSSMATEDSKDNNTAKDNKDADKK) form a disordered region. A compositionally biased stretch (basic and acidic residues) spans 108–125 (EDSKDNNTAKDNKDADKK).

This is an uncharacterized protein from Rickettsia bellii (strain RML369-C).